The primary structure comprises 198 residues: ATP-dependent Clp protease proteolytic subunit (198 aa).

Ser-98 acts as the Nucleophile in catalysis. The active site involves His-123.

It belongs to the peptidase S14 family. As to quaternary structure, fourteen ClpP subunits assemble into 2 heptameric rings which stack back to back to give a disk-like structure with a central cavity, resembling the structure of eukaryotic proteasomes.

The protein resides in the cytoplasm. It catalyses the reaction Hydrolysis of proteins to small peptides in the presence of ATP and magnesium. alpha-casein is the usual test substrate. In the absence of ATP, only oligopeptides shorter than five residues are hydrolyzed (such as succinyl-Leu-Tyr-|-NHMec, and Leu-Tyr-Leu-|-Tyr-Trp, in which cleavage of the -Tyr-|-Leu- and -Tyr-|-Trp bonds also occurs).. In terms of biological role, cleaves peptides in various proteins in a process that requires ATP hydrolysis. Has a chymotrypsin-like activity. Plays a major role in the degradation of misfolded proteins. This is ATP-dependent Clp protease proteolytic subunit from Listeria monocytogenes serovar 1/2a (strain ATCC BAA-679 / EGD-e).